We begin with the raw amino-acid sequence, 139 residues long: Ribulose bisphosphate carboxylase small subunit (139 aa).

It belongs to the RuBisCO small chain family. In terms of assembly, heterohexadecamer of 8 large and 8 small subunits.

Its subcellular location is the plastid. It localises to the chloroplast. In terms of biological role, ruBisCO catalyzes two reactions: the carboxylation of D-ribulose 1,5-bisphosphate, the primary event in carbon dioxide fixation, as well as the oxidative fragmentation of the pentose substrate in the photorespiration process. Both reactions occur simultaneously and in competition at the same active site. Although the small subunit is not catalytic it is essential for maximal activity. This chain is Ribulose bisphosphate carboxylase small subunit, found in Olisthodiscus luteus (Marine phytoflagellate).